Reading from the N-terminus, the 190-residue chain is MTEEQKKYEDAENLESKSENPEEASAEKSENGVEDLQAENEKLKKDLLYSKAEAQNTRRRLEKEKSEAIAYSVTGFARDMLSVADNMERALAAIPDDIKQDEKIKNLVTGIEMTGKELLNILQRHGIKRVESVGQKLDPNLHQAMIEIESEKPEGTVVQEMQAGYTIHDRLLRPAMVGVAKAQSGETKSA.

Over residues 1–31 (MTEEQKKYEDAENLESKSENPEEASAEKSEN) the composition is skewed to basic and acidic residues. Residues 1 to 39 (MTEEQKKYEDAENLESKSENPEEASAEKSENGVEDLQAE) form a disordered region.

Belongs to the GrpE family. As to quaternary structure, homodimer.

The protein resides in the cytoplasm. Participates actively in the response to hyperosmotic and heat shock by preventing the aggregation of stress-denatured proteins, in association with DnaK and GrpE. It is the nucleotide exchange factor for DnaK and may function as a thermosensor. Unfolded proteins bind initially to DnaJ; upon interaction with the DnaJ-bound protein, DnaK hydrolyzes its bound ATP, resulting in the formation of a stable complex. GrpE releases ADP from DnaK; ATP binding to DnaK triggers the release of the substrate protein, thus completing the reaction cycle. Several rounds of ATP-dependent interactions between DnaJ, DnaK and GrpE are required for fully efficient folding. The protein is Protein GrpE of Zymomonas mobilis subsp. mobilis (strain ATCC 31821 / ZM4 / CP4).